A 495-amino-acid chain; its full sequence is Non-structural protein 1 (495 aa).

Residues 1-81 (MATFKDACFH…CFLDNEPHLL (81 aa)) form an RNA-binding region. Residues 42–79 (CLECCQIADLTHCYGCSLPHVCKWCVQNRRCFLDNEPH) form a zinc-binding domain region. The interval 82–177 (KLQQLKHPIT…DIYAPYRIVN (96 aa)) is important for cytoskeleton localization. The interaction with host IRF3 stretch occupies residues 320–495 (DIQYCKWCNI…LISNSEDDNE (176 aa)). The pLxIS motif signature appears at 485-488 (LLIS).

Belongs to the rotavirus NSP1 family. In terms of assembly, interacts (via C-terminus) with host IRF3; this interaction leads to IRF3 degradation. Interacts with host IRF7; this interaction leads to IRF7 degradation. Interacts with host CUL1 and CUL3.

It localises to the host cytoplasm. It is found in the host cytoskeleton. Its function is as follows. Plays a role in the inhibition of host innate immunity by inducing the degradation of key host factors required to activate interferon production such as IRF3, IRF5 or IRF7. Associates with components of cullin RING ligases (CRLs) including CUL1 or CUL3, which are essential multisubunit ubiquitination complexes, to modulate their activities. This chain is Non-structural protein 1, found in Macaca mulatta (Rhesus macaque).